A 75-amino-acid chain; its full sequence is Translational regulator CsrA (75 aa).

Belongs to the CsrA/RsmA family. In terms of assembly, homodimer; the beta-strands of each monomer intercalate to form a hydrophobic core, while the alpha-helices form wings that extend away from the core.

Its subcellular location is the cytoplasm. Its function is as follows. A translational regulator that binds mRNA to regulate translation initiation and/or mRNA stability. Usually binds in the 5'-UTR at or near the Shine-Dalgarno sequence preventing ribosome-binding, thus repressing translation. Its main target seems to be the major flagellin gene, while its function is anatagonized by FliW. This Alkaliphilus metalliredigens (strain QYMF) protein is Translational regulator CsrA.